A 560-amino-acid chain; its full sequence is MSTHNEYDYIIIGAGSAGNVLATRLTEDADVSVLLLEAGGPDYRLDFRTQMPAALAFPLQGKRYNWAYKTDPEPFMNNRRMDCGRGKGLGGSSLINGMCYIRGNAMDYDNWASMPGLEDWTYLDCLPYFRKAETRDIGPNDYHGGEGPLRVTTPKAGNNELFAAMVEAGVQAGYPRTDDLNGYQQEGFGPMDRTVTPKGRRSSTARGYLDLAKPRPNLTIVTHALTDRILFSGKRAVGVQWLHNDQPQRATARREVLLCGGAIASPQILQRSGVGPADLLRSLDIDLVHHLPGVGANLQDHLEMYLQYECKKPVSLAPALKLYNQPAIGAEWLFLGTGIGASNQFEAGGFIRSDTEFDWPNLQYHFLPVAINYNGSNPIKAHSFQMHVGSMRSPSRGRIHVRSKDPREHPSILFNYMSHDQDWREFRAAIRITREIFAQPALAPYSGREISPGSALQTDAQIDAFVREHAETAYHPSCSNKMGHADDPMAVVDGQGRVHGLEGLRIVDASIMPQVVTGNLNAPTIMIAEKLADVIRGRTPLARSTAPYYKANGAPVRKQG.

8 to 37 (DYIIIGAGSAGNVLATRLTEDADVSVLLLE) lines the FAD pocket. The Proton acceptor role is filled by His475.

It belongs to the GMC oxidoreductase family. The cofactor is FAD.

The enzyme catalyses choline + A = betaine aldehyde + AH2. It catalyses the reaction betaine aldehyde + NAD(+) + H2O = glycine betaine + NADH + 2 H(+). The protein operates within amine and polyamine biosynthesis; betaine biosynthesis via choline pathway; betaine aldehyde from choline (cytochrome c reductase route): step 1/1. In terms of biological role, involved in the biosynthesis of the osmoprotectant glycine betaine. Catalyzes the oxidation of choline to betaine aldehyde and betaine aldehyde to glycine betaine at the same rate. The chain is Oxygen-dependent choline dehydrogenase from Stenotrophomonas maltophilia (strain R551-3).